Here is a 418-residue protein sequence, read N- to C-terminus: Dihydrofolate synthase/folylpolyglutamate synthase (418 aa).

53-56 (GKGT) lines the ATP pocket. Ser77 is a Mg(2+) binding site. 116–119 (TYFE) is a 7,8-dihydropteroate binding site. Residue Glu140 coordinates Mg(2+). 147–149 (LDA) serves as a coordination point for 7,8-dihydropteroate. His167 is a Mg(2+) binding site. ATP-binding residues include Asn252, Arg284, and Asp297.

Belongs to the folylpolyglutamate synthase family. In terms of assembly, monomer. Requires Mg(2+) as cofactor.

The catalysed reaction is 7,8-dihydropteroate + L-glutamate + ATP = 7,8-dihydrofolate + ADP + phosphate + H(+). It catalyses the reaction (6S)-5,6,7,8-tetrahydrofolyl-(gamma-L-Glu)(n) + L-glutamate + ATP = (6S)-5,6,7,8-tetrahydrofolyl-(gamma-L-Glu)(n+1) + ADP + phosphate + H(+). The enzyme catalyses 10-formyltetrahydrofolyl-(gamma-L-Glu)(n) + L-glutamate + ATP = 10-formyltetrahydrofolyl-(gamma-L-Glu)(n+1) + ADP + phosphate + H(+). It carries out the reaction (6R)-5,10-methylenetetrahydrofolyl-(gamma-L-Glu)(n) + L-glutamate + ATP = (6R)-5,10-methylenetetrahydrofolyl-(gamma-L-Glu)(n+1) + ADP + phosphate + H(+). It participates in cofactor biosynthesis; tetrahydrofolate biosynthesis; 7,8-dihydrofolate from 2-amino-4-hydroxy-6-hydroxymethyl-7,8-dihydropteridine diphosphate and 4-aminobenzoate: step 2/2. The protein operates within cofactor biosynthesis; tetrahydrofolylpolyglutamate biosynthesis. Functionally, functions in two distinct reactions of the de novo folate biosynthetic pathway. Catalyzes the addition of a glutamate residue to dihydropteroate (7,8-dihydropteroate or H2Pte) to form dihydrofolate (7,8-dihydrofolate monoglutamate or H2Pte-Glu). Also catalyzes successive additions of L-glutamate to tetrahydrofolate or 10-formyltetrahydrofolate or 5,10-methylenetetrahydrofolate, leading to folylpolyglutamate derivatives. This Buchnera aphidicola subsp. Schizaphis graminum (strain Sg) protein is Dihydrofolate synthase/folylpolyglutamate synthase (folC).